Here is a 107-residue protein sequence, read N- to C-terminus: Nucleoid-associated protein YaaK (107 aa).

The interval 1 to 24 (MRGGMGNMQKMMKQMQKMQKDMAK) is disordered. Positions 8 to 17 (MQKMMKQMQK) are enriched in low complexity.

Belongs to the YbaB/EbfC family. In terms of assembly, homodimer.

Its subcellular location is the cytoplasm. It localises to the nucleoid. Binds to DNA and alters its conformation. May be involved in regulation of gene expression, nucleoid organization and DNA protection. The protein is Nucleoid-associated protein YaaK (yaaK) of Bacillus subtilis (strain 168).